We begin with the raw amino-acid sequence, 847 residues long: Glucans biosynthesis glucosyltransferase H (847 aa).

At 1 to 139 (MNKTTEYIDA…WRTVGTIRRY (139 aa)) the chain is on the cytoplasmic side. The helical transmembrane segment at 140–160 (ILLILTLAQTVVATWYMKTIL) threads the bilayer. Residues 161–193 (PYQGWALINPMDMVGQDLWVSFMQLLPYMLQTG) are Periplasmic-facing. The helical transmembrane segment at 194-214 (ILILFAVLFCWVSAGFWTALM) threads the bilayer. The Cytoplasmic segment spans residues 215-512 (GFLQLLIGRD…VKGMHPVHRA (298 aa)). Residues 513–533 (VFLTGVMSYLSAPLWFMFLAL) form a helical membrane-spanning segment. At 534–569 (STALQVVHALTEPQYFLQPRQLFPVWPQWRPELAIA) the chain is on the periplasmic side. The helical transmembrane segment at 570-590 (LFASTMVLLFLPKLLSILLIW) threads the bilayer. Residues 591-602 (CKGTKEYGGFWR) lie on the Cytoplasmic side of the membrane. A helical membrane pass occupies residues 603–625 (VTLSLLLEVLFSVLLAPVRMLFH). Over 626–679 (TVFVVSAFLGWEVVWNSPQRDDDSTSWGEAFKRHGSQLLLGLVWAVGMAWLDLR) the chain is Periplasmic. The chain crosses the membrane as a helical span at residues 680 to 700 (FLFWLAPIVFSLILSPFVSVI). Residues 701-847 (SSRATVGLRT…ALRKPDAASQ (147 aa)) are Cytoplasmic-facing.

Belongs to the glycosyltransferase 2 family. OpgH subfamily.

The protein resides in the cell inner membrane. Its pathway is glycan metabolism; osmoregulated periplasmic glucan (OPG) biosynthesis. In terms of biological role, involved in the biosynthesis of osmoregulated periplasmic glucans (OPGs). The sequence is that of Glucans biosynthesis glucosyltransferase H (mdoH) from Shigella flexneri.